A 299-amino-acid chain; its full sequence is Biotin transporter (299 aa).

The next 10 membrane-spanning stretches (helical) occupy residues 2 to 22, 26 to 46, 56 to 76, 81 to 101, 110 to 130, 137 to 157, 172 to 192, 202 to 222, 233 to 253, and 256 to 276; these read ALLIITTILWAFSFSFYGEYL, VDSYFAVLVRVGLAALVFLPF, TVGLYMLVGAMQLGVMYMLSF, YLTVSELLLFTVLTPLYITLI, LRWGYAFSALLAVIGAGIIRY, FWTGLLLVQLSNITFAIGMVG, AFAWFYLGAFLVAVIAWFLLG, LQWGILVFLGVVASGIGYFMW, TLGIMNNMHVPAGLLVNLAIW, and QPHWPTFITGALVILASLWVH. 2 EamA domains span residues 3–128 and 139–274; these read LLII…AGII and TGLL…ASLW.

This sequence belongs to the drug/metabolite transporter (DMT) superfamily. 10 TMS drug/metabolite exporter (DME) (TC 2.A.7.3) family.

Its subcellular location is the cell inner membrane. It carries out the reaction biotin(in) = biotin(out). Uptake of biotin. The sequence is that of Biotin transporter from Escherichia coli O157:H7.